The chain runs to 234 residues: Urease subunit alpha (234 aa).

Residues 1-102 form a urease gamma region; that stretch reads MKLTPKELDK…LVTIHTPVEA (102 aa). Positions 103-234 are urease beta; it reads GSDKLAPGEV…GTINCGCDNK (132 aa).

This sequence in the N-terminal section; belongs to the urease gamma subunit family. The protein in the C-terminal section; belongs to the urease beta subunit family. Heterohexamer of 3 UreA (alpha) and 3 UreB (beta) subunits.

The protein localises to the cytoplasm. The catalysed reaction is urea + 2 H2O + H(+) = hydrogencarbonate + 2 NH4(+). It participates in nitrogen metabolism; urea degradation; CO(2) and NH(3) from urea (urease route): step 1/1. The protein is Urease subunit alpha of Helicobacter heilmannii.